The sequence spans 902 residues: Respiratory burst oxidase homolog protein A (902 aa).

Over 1–344 (MMNRSEMQKL…KYFLFDNWKR (344 aa)) the chain is Cytoplasmic. Disordered stretches follow at residues 63-87 (KSPNHRGAGSNYEDQSLLRQGRSGR) and 107-130 (ASSVSSSSARKPPRPQLAKLRRSK). Over residues 74 to 87 (YEDQSLLRQGRSGR) the composition is skewed to polar residues. The segment covering 107–116 (ASSVSSSSAR) has biased composition (low complexity). EF-hand-like regions lie at residues 163 to 173 (TMTTNGLLHRS) and 198 to 209 (ENVSGDSININE). EF-hand domains lie at 221 to 256 (DFDSRLRTFFAMVDKDSDGRLNEAEVREIITLSASA) and 265 to 300 (QADEYAALIMEELDPYHYGYIMIENLEILLLQAPMQ). Ca(2+) contacts are provided by Asp-234, Asp-236, Asp-238, Arg-240, and Glu-245. Phosphoserine is present on residues Ser-311 and Ser-315. A helical membrane pass occupies residues 345–365 (VWVMALWIGAMAGLFTWKFME). Residues 366–380 (YRKRSAYEVMGVCVC) are Extracellular-facing. A helical transmembrane segment spans residues 381–401 (IAKGAAETLKLNMAMILLPVC). The region spanning 383 to 540 (KGAAETLKLN…LFVIVYSLLV (158 aa)) is the Ferric oxidoreductase domain. Topologically, residues 402 to 428 (RNTITWLRTKTKLSAIVPFDDSLNFHK) are cytoplasmic. A helical membrane pass occupies residues 429–449 (VIAIGISVGVGIHATSHLACD). Residues 450–484 (FPRLIAADEDQYEPMEKYFGPQTKRYLDFVQSVEG) are Extracellular-facing. A helical membrane pass occupies residues 485 to 505 (VTGIGMVVLMTIAFTLATTWF). The Cytoplasmic portion of the chain corresponds to 506–529 (RRNKLNLPGPLKKITGFNAFWYSH). A helical membrane pass occupies residues 530-550 (HLFVIVYSLLVVHGFYVYLII). The Extracellular segment spans residues 551–709 (EPWYKKTTWM…PAQDYKKFEV (159 aa)). Residues 575–703 (IRAFRSSVEA…DGPYGAPAQD (129 aa)) form the FAD-binding FR-type domain. The chain crosses the membrane as a helical span at residues 710–730 (VLLVGLGIGATPMISIVSDII). Residues 731–902 (NNLKGVEEGS…TKFIFHKENF (172 aa)) lie on the Cytoplasmic side of the membrane. Residues 738-760 (EGSNRRQSPIHNMVTPPVSPSRK) form a disordered region.

This sequence belongs to the RBOH (TC 5.B.1.3) family. Monomer and homodimer.

The protein resides in the membrane. Calcium-dependent NADPH oxidase that generates superoxide. This is Respiratory burst oxidase homolog protein A (RBOHA) from Arabidopsis thaliana (Mouse-ear cress).